Reading from the N-terminus, the 241-residue chain is MPDYMQEIERISEFLRKVLQGKNAVIGISGGIDSSVTLALLTRSIPKERIIPVFMPDRNTQQADYDDVQKLTQKLGLTYREVRIDPMVDSFVSTLAATDRAAIGNIKSRTRMIILYYFANTNGGMVVGTTNRTELLLGYFTKYGDGGCDVEPIEHLYKRDVYELAKILDIPESIMKKKPTAGLWAGQTDEDEIGMSYAQMDEILSDVFDKGTYNDKPEYKKIMEMHSLSDHKRNLPYSLKK.

27 to 34 is a binding site for ATP; that stretch reads GISGGIDS. Position 33 (Asp-33) interacts with Mg(2+). Deamido-NAD(+) is bound at residue Arg-109. Position 129 (Thr-129) interacts with ATP. Residue Glu-134 participates in Mg(2+) binding. Deamido-NAD(+) contacts are provided by Lys-142 and Asp-149. ATP-binding residues include Lys-158 and Thr-180. 231 to 232 lines the deamido-NAD(+) pocket; sequence HK.

The protein belongs to the NAD synthetase family. In terms of assembly, homodimer.

The catalysed reaction is deamido-NAD(+) + NH4(+) + ATP = AMP + diphosphate + NAD(+) + H(+). Its pathway is cofactor biosynthesis; NAD(+) biosynthesis; NAD(+) from deamido-NAD(+) (ammonia route): step 1/1. Functionally, catalyzes the ATP-dependent amidation of deamido-NAD to form NAD. Uses ammonia as a nitrogen source. In Thermoplasma acidophilum (strain ATCC 25905 / DSM 1728 / JCM 9062 / NBRC 15155 / AMRC-C165), this protein is NH(3)-dependent NAD(+) synthetase.